The primary structure comprises 7524 residues: Mucin-19 (7524 aa).

The N-terminal stretch at 1–20 is a signal peptide; that stretch reads MKLILLYLAVVLCFVGKGAA. The segment at 20-47 is disordered; the sequence is ARSPTTTRTPTPSTSEKASHVPEATPTY. Residues 21-34 are compositionally biased toward low complexity; the sequence is RSPTTTRTPTPSTS. One can recognise a VWFD 1 domain in the interval 55 to 225; sequence GEATMWGKDK…VCEDGVQYCD (171 aa). A disulfide bond links Cys79 and Cys224. Positions 298 to 353 constitute a TIL domain; it reads CPGKHIYKECGPSNPPTCSNVAPFQDSECVSGCTCPEGYLLDDIGEKGKCVLKEKC. VWFD domains follow at residues 392–568 and 851–1025; these read GICK…EGSP and STCH…QECS. 6 disulfide bridges follow: Cys394/Cys529, Cys434/Cys442, Cys853/Cys989, Cys875/Cys1024, Cys884/Cys986, and Cys900/Cys907. The segment covering 1244-1261 has biased composition (low complexity); sequence AAATRASSSTSGSVETSV. 2 disordered regions span residues 1244-7217 and 7249-7297; these read AAAT…SSLA and SVIK…CPDS. Positions 1262-1289 are enriched in polar residues; that stretch reads PATTSTSKAQAHITTASSTETSALNSTA. Composition is skewed to low complexity over residues 1320 to 7099 and 7112 to 7217; these read PAVS…AGSG and STSG…SSLA. A run of 36 repeats spans residues 1321–1483, 1484–1646, 1647–1809, 1810–1972, 1973–2135, 2136–2298, 2299–2461, 2462–2624, 2625–2787, 2788–2950, 2951–3113, 3114–3276, 3277–3439, 3440–3602, 3603–3765, 3766–3928, 3929–4091, 4092–4254, 4255–4417, 4418–4580, 4581–4743, 4744–4906, 4907–5069, 5070–5232, 5233–5395, 5396–5558, 5559–5721, 5722–5884, 5885–6047, 6048–6210, 6211–6373, 6374–6536, 6537–6699, 6700–6862, 6863–7025, and 7026–7188. Positions 1321–7188 are approximate repeats; the sequence is AVSTTSAGST…AETAGSTTGP (5868 aa). Positions 7261–7291 are enriched in polar residues; the sequence is AKSNETTGRTTSMPASTSVAPGVTTSPNISQ. VWFC domains lie at 7302–7368 and 7370–7432; these read PVCH…GHCE and RTCL…YKCK. 4 disulfide bridges follow: Cys7435–Cys7482, Cys7449–Cys7496, Cys7458–Cys7512, and Cys7462–Cys7514. Positions 7435–7519 constitute a CTCK domain; the sequence is CRTTPVNVTV…TTCSCRDQCE (85 aa).

In terms of tissue distribution, specifically expressed in sublingual salivary glands. Expressed by mucous cells of the submandibular gland and submucosal gland of the trachea. Expression is altered in sld (sublingual gland differentiation arrest) mutants.

It localises to the secreted. Its function is as follows. May function in ocular mucus homeostasis. The sequence is that of Mucin-19 (Muc19) from Mus musculus (Mouse).